A 171-amino-acid chain; its full sequence is Ribosome maturation factor RimM (171 aa).

The PRC barrel domain occupies 96–170 (AEGEYYYHEI…LVTIHVMEGL (75 aa)).

The protein belongs to the RimM family. As to quaternary structure, binds ribosomal protein uS19.

Its subcellular location is the cytoplasm. Its function is as follows. An accessory protein needed during the final step in the assembly of 30S ribosomal subunit, possibly for assembly of the head region. Essential for efficient processing of 16S rRNA. May be needed both before and after RbfA during the maturation of 16S rRNA. It has affinity for free ribosomal 30S subunits but not for 70S ribosomes. The protein is Ribosome maturation factor RimM of Bacillus mycoides (strain KBAB4) (Bacillus weihenstephanensis).